Consider the following 170-residue polypeptide: NADH-quinone oxidoreductase subunit B (170 aa).

[4Fe-4S] cluster-binding residues include Cys42, Cys43, Cys107, and Cys136.

This sequence belongs to the complex I 20 kDa subunit family. NDH-1 is composed of 14 different subunits. Subunits NuoB, C, D, E, F, and G constitute the peripheral sector of the complex. The cofactor is [4Fe-4S] cluster.

It localises to the cell inner membrane. The catalysed reaction is a quinone + NADH + 5 H(+)(in) = a quinol + NAD(+) + 4 H(+)(out). Functionally, NDH-1 shuttles electrons from NADH, via FMN and iron-sulfur (Fe-S) centers, to quinones in the respiratory chain. The immediate electron acceptor for the enzyme in this species is believed to be ubiquinone. Couples the redox reaction to proton translocation (for every two electrons transferred, four hydrogen ions are translocated across the cytoplasmic membrane), and thus conserves the redox energy in a proton gradient. This is NADH-quinone oxidoreductase subunit B from Campylobacter concisus (strain 13826).